The chain runs to 741 residues: MSLSMRDPVIPGTSMAYHPFLPHRAPDFAMSAVLGHQPPFFPALTLPPNGAAALSLPGALAKPIMDQLVGAAETGIPFSSLGPQAHLRPLKTMEPEEDVEDDPKVHLEAKELWDQFHKRGTEMVITKSGRRMFPPFKVRCSGLDKKAKYILLMDIIAADDCRYKFHNSRWMVAGKADPEMPKRMYIHPDSPATGEQWMSKVVTFHKLKLTNNISDKHGFTLAFPSDHATWQGNYSFGTQTILNSMHKYQPRFHIVRANDILKLPYSTFRTYLFPETEFIAVTAYQNDKITQLKIDNNPFAKGFRDTGNGRREKRKQLTLQSMRVFEERHKKETSDESSSEQAAFNCFAQASSPAVSIVGTSNLKDLCPSEAESDAEAESKEEHGPEACDAAKISTTTAEEPGRDKGSPATRAQLFPAEPSRARDTARLDKASPDSRHSPATISSSTRVPGADERRSPGREGPVATKVDEARAIPAKDAFAPLSVQTDATAHLAQGPLPGLGFAPGLAGQQFFNGHPLFLHPGQFAMGGAFSSMAAGMGPLLATVSGASTGVSGLESTAMASAAAAQGLSGASAATLPFHLQQHVLASQGLAMSPFGSLFPYPYTYMAAAAAASTAAASSSVHRHPFLNLNSMRPRLRYSPYSIPVPVPDSSSLLATALPSMASAAGPLDGKAAALAASPASVAVDSGSELNSRSSTLSSGSVSLSPKLCSEKEAATSELQSIQRLVSGLEAKPDRSCSGSP.

A DNA-binding region (T-box; first part) is located at residues 107-220 (LEAKELWDQF…NNISDKHGFT (114 aa)). Residues 241 to 305 (ILNSMHKYQP…NNPFAKGFRD (65 aa)) constitute a DNA-binding region (T-box; second part). At S369 the chain carries Phosphoserine. The tract at residues 369 to 469 (SEAESDAEAE…EGPVATKVDE (101 aa)) is disordered. Composition is skewed to basic and acidic residues over residues 377-386 (AESKEEHGPE) and 420-437 (SRAR…DSRH). Residues S432, S438, S456, S705, S736, S738, and S740 each carry the phosphoserine modification. A compositionally biased stretch (polar residues) spans 438–447 (SPATISSSTR).

Interacts with PML. As to expression, in adults, highest levels in lung. Also found in brain, heart, kidney, liver and ovary.

The protein resides in the nucleus. In terms of biological role, transcriptional repressor involved in developmental processes. Binds to the palindromic T site 5'-TTCACACCTAGGTGTGAA-3' DNA sequence, or a half-site, which are present in the regulatory region of several genes. Probably plays a role in limb pattern formation. Required for mammary placode induction, and maintenance of the mammary buds during development. Involved in branching morphogenesis in both developing lungs and adult mammary glands, via negative modulation of target genes; acting redundantly with TBX2. Required, together with TBX2, to maintain cell proliferation in the embryonic lung mesenchyme; perhaps acting downstream of SHH, BMP and TGFbeta signaling. Involved in modulating early inner ear development, acting independently of, and also redundantly with, TBX2 in different subregions of the developing ear. Acts as a negative regulator of PML function in cellular senescence. In Mus musculus (Mouse), this protein is T-box transcription factor TBX3 (Tbx3).